The chain runs to 557 residues: Glucose-6-phosphate isomerase (557 aa).

Ala2 carries the N-acetylalanine modification. Residue Lys12 is modified to N6-acetyllysine. Position 107 is a phosphoserine (Ser107). Lys142 carries the post-translational modification N6-acetyllysine. A D-glucose 6-phosphate-binding site is contributed by 159–160 (GS). Ser185 is subject to Phosphoserine; by CK2. D-glucose 6-phosphate is bound at residue 210-215 (SKTFTT). The residue at position 250 (Thr250) is a Phosphothreonine. D-glucose 6-phosphate contacts are provided by Gln354, Glu358, and His389. The active-site Proton donor is Glu358. His389 is an active-site residue. At Ser455 the chain carries Phosphoserine. A D-glucose 6-phosphate-binding site is contributed by Lys519. Residue Lys519 is part of the active site.

This sequence belongs to the GPI family. In terms of assembly, homodimer; in the catalytically active form. Monomer in the secreted form. In terms of processing, phosphorylation at Ser-185 by CK2 has been shown to decrease enzymatic activity and may contribute to secretion by a non-classical secretory pathway. Post-translationally, ISGylated.

Its subcellular location is the cytoplasm. The protein resides in the secreted. It carries out the reaction alpha-D-glucose 6-phosphate = beta-D-fructose 6-phosphate. It participates in carbohydrate degradation; glycolysis; D-glyceraldehyde 3-phosphate and glycerone phosphate from D-glucose: step 2/4. Its function is as follows. In the cytoplasm, catalyzes the conversion of glucose-6-phosphate to fructose-6-phosphate, the second step in glycolysis, and the reverse reaction during gluconeogenesis. Besides it's role as a glycolytic enzyme, also acts as a secreted cytokine: acts as an angiogenic factor (AMF) that stimulates endothelial cell motility. Acts as a neurotrophic factor, neuroleukin, for spinal and sensory neurons. It is secreted by lectin-stimulated T-cells and induces immunoglobulin secretion. The polypeptide is Glucose-6-phosphate isomerase (Bos taurus (Bovine)).